The primary structure comprises 862 residues: Autotaxin (862 aa).

The N-terminal stretch at 1–27 (MARQGCFGSYQVISLFTFAIGVNLCLG) is a signal peptide. The propeptide at 28–35 (FTASRIKR) is removed by furin. The N-linked (GlcNAc...) asparagine glycan is linked to asparagine 53. SMB domains are found at residues 54 to 97 (TSGS…LKTA) and 98 to 142 (RGWE…GESH). Intrachain disulfides connect cysteine 58–cysteine 75, cysteine 62–cysteine 93, cysteine 73–cysteine 86, cysteine 79–cysteine 85, cysteine 102–cysteine 119, cysteine 107–cysteine 137, cysteine 117–cysteine 130, cysteine 123–cysteine 129, cysteine 148–cysteine 194, and cysteine 156–cysteine 350. The Cell attachment site signature appears at 126–128 (RGD). Residues 144–501 (VDDDCEEIRV…PTFKYRTKVP (358 aa)) form a phosphodiesterase domain region. Zn(2+) contacts are provided by aspartate 171 and threonine 209. Catalysis depends on threonine 209, which acts as the Nucleophile. The 1-(9Z-octadecenoyl)-sn-glycero-3-phosphate site is built by threonine 209, asparagine 230, and aspartate 311. Residues threonine 209, asparagine 230, and aspartate 311 each contribute to the 1-hexadecanoyl-sn-glycero-3-phosphate site. Threonine 209, asparagine 230, and aspartate 311 together coordinate 1-tetradecanoyl-sn-glycerol 3-phosphate. Positions 311, 315, 358, and 359 each coordinate Zn(2+). Cystine bridges form between cysteine 366/cysteine 468, cysteine 413/cysteine 805, cysteine 566/cysteine 666, cysteine 568/cysteine 651, and cysteine 774/cysteine 784. An N-linked (GlcNAc...) asparagine glycan is attached at asparagine 410. Histidine 474 contacts Zn(2+). Histidine 474 is a binding site for 1-(9Z-octadecenoyl)-sn-glycero-3-phosphate. Histidine 474 is a 1-hexadecanoyl-sn-glycero-3-phosphate binding site. Position 474 (histidine 474) interacts with 1-tetradecanoyl-sn-glycerol 3-phosphate. Asparagine 524 carries N-linked (GlcNAc...) asparagine glycosylation. The tract at residues 597 to 862 (LYGRPAVLYR…TYLHTYESEI (266 aa)) is nuclease-like domain. Aspartate 739, asparagine 741, asparagine 743, leucine 745, and aspartate 747 together coordinate Ca(2+). The N-linked (GlcNAc...) asparagine glycan is linked to asparagine 806. Residues 829–850 (IEHLTGLDFYRKTSRSYSEILT) are required for secretion.

This sequence belongs to the nucleotide pyrophosphatase/phosphodiesterase family. Zn(2+) serves as cofactor. It depends on Ca(2+) as a cofactor. N-glycosylation, but not furin-cleavage, plays a critical role on secretion and on lysoPLD activity. Secretion requires simultaneous glycosylation on Asn-53 and Asn-410, while probable glycosylation of Asn-410 has a preferential role on lysoPLD activity. Not O-glycosylated. Post-translationally, the interdomain disulfide bond between Cys-413 and Cys-805 is essential for catalytic activity. Expressed in brain and adipose tissue.

The protein localises to the secreted. The enzyme catalyses a 1-O-alkyl-sn-glycero-3-phosphoethanolamine + H2O = a 1-O-alkyl-sn-glycero-3-phosphate + ethanolamine + H(+). The catalysed reaction is a 1-acyl-sn-glycero-3-phosphoethanolamine + H2O = a 1-acyl-sn-glycero-3-phosphate + ethanolamine + H(+). It carries out the reaction 1-(9Z-octadecenoyl)-sn-glycero-3-phosphoethanolamine + H2O = 1-(9Z-octadecenoyl)-sn-glycero-3-phosphate + ethanolamine + H(+). It catalyses the reaction a 1-O-alkyl-sn-glycero-3-phosphocholine + H2O = a 1-O-alkyl-sn-glycero-3-phosphate + choline + H(+). The enzyme catalyses 1-O-(9Z-octadecenyl)-sn-glycero-3-phosphocholine + H2O = 1-O-(9Z-octadecenyl)-sn-glycero-3-phosphate + choline + H(+). The catalysed reaction is 1-O-hexadecyl-sn-glycero-3-phosphocholine + H2O = 1-O-hexadecyl-sn-glycero-3-phosphate + choline + H(+). It carries out the reaction a 1-O-(1Z-alkenyl)-sn-glycero-3-phosphocholine + H2O = a 1-O-(1Z-alkenyl)-sn-glycero-3-phosphate + choline + H(+). It catalyses the reaction a 1-acyl-sn-glycero-3-phosphocholine + H2O = a 1-acyl-sn-glycero-3-phosphate + choline + H(+). The enzyme catalyses 1-dodecanoyl-sn-glycero-3-phosphocholine + H2O = 1-dodecanoyl-sn-glycerol 3-phosphate + choline + H(+). The catalysed reaction is 1-(9Z-octadecenoyl)-sn-glycero-3-phosphocholine + H2O = 1-(9Z-octadecenoyl)-sn-glycero-3-phosphate + choline + H(+). It carries out the reaction 1-tetradecanoyl-sn-glycero-3-phosphocholine + H2O = 1-tetradecanoyl-sn-glycerol 3-phosphate + choline + H(+). It catalyses the reaction 1-decanoyl-sn-glycero-3-phosphocholine + H2O = 1-decanoyl-sn-glycero-3-phosphate + choline + H(+). The enzyme catalyses 1-octadecanoyl-sn-glycero-3-phosphocholine + H2O = 1-octadecanoyl-sn-glycero-3-phosphate + choline + H(+). The catalysed reaction is 1-hexadecanoyl-sn-glycero-3-phosphocholine + H2O = 1-hexadecanoyl-sn-glycero-3-phosphate + choline + H(+). It carries out the reaction 1-hexanoyl-sn-glycero-3-phosphocholine + H2O = 1-hexanoyl-sn-glycero-3-phosphate + choline + H(+). It catalyses the reaction 1-(9Z,12Z)-octadecadienoyl-sn-glycero-3-phosphocholine + H2O = 1-(9Z,12Z)-octadecadienoyl-sn-glycero-3-phosphate + choline + H(+). The enzyme catalyses sphing-4-enine-phosphocholine + H2O = sphing-4-enine 1-phosphate + choline + H(+). The catalysed reaction is 1-(5Z,8Z,11Z,14Z-eicosatetraenoyl)-sn-glycero-3-phosphocholine + H2O = 1-(5Z,8Z,11Z,14Z-eicosatetraenoyl)-sn-glycero-3-phosphate + choline + H(+). It carries out the reaction a 2-acyl-sn-glycero-3-phosphocholine + H2O = a 2-acyl-sn-glycerol 3-phosphate + choline + H(+). It catalyses the reaction a 1,2-diacyl-sn-glycero-3-phosphocholine + H2O = a 1,2-diacyl-sn-glycero-3-phosphate + choline + H(+). The enzyme catalyses 1,2-dioctanoyl-sn-glycero-3-phosphocholine + H2O = 1,2-dioctanoyl-sn-glycero-3-phosphate + choline + H(+). The catalysed reaction is 1,2-didecanoyl-sn-glycero-3-phosphocholine + H2O = 1,2-didecanoyl-sn-glycero-3-phosphate + choline + H(+). It carries out the reaction a 1-acyl-sn-glycero-3-phospho-L-serine + H2O = a 1-acyl-sn-glycero-3-phosphate + L-serine + H(+). It catalyses the reaction 1-(9Z-octadecenoyl)-sn-glycero-3-phospho-L-serine + H2O = 1-(9Z-octadecenoyl)-sn-glycero-3-phosphate + L-serine + H(+). The enzyme catalyses a 2-acyl-sn-glycero-3-phospho-L-serine + H2O = a 2-acyl-sn-glycerol 3-phosphate + L-serine + H(+). With respect to regulation, inhibited by EDTA and EGTA. Secreted lysophospholipase D that hydrolyzes lysophospholipids to produce the signaling molecule lysophosphatidic acid (LPA) in extracellular fluids. Its major substrate is lysophosphatidylcholine. Can also act on sphingosylphosphorylcholine producing sphingosine-1-phosphate, a modulator of cell motility. Can hydrolyze, in vitro, bis-pNPP, to some extent pNP-TMP, and barely ATP. Involved in several motility-related processes such as angiogenesis and neurite outgrowth. Acts as an angiogenic factor by stimulating migration of smooth muscle cells and microtubule formation. Stimulates migration of melanoma cells, probably via a pertussis toxin-sensitive G protein. May have a role in induction of parturition. Possible involvement in cell proliferation and adipose tissue development. Required for LPA production in activated platelets, cleaves the sn-1 lysophospholipids to generate sn-1 lysophosphatidic acids containing predominantly 18:2 and 20:4 fatty acids. Shows a preference for the sn-1 to the sn-2 isomer of 1-O-alkyl-sn-glycero-3-phosphocholine (lyso-PAF). This Mus musculus (Mouse) protein is Autotaxin.